The chain runs to 434 residues: Serine/threonine-protein kinase Sgk1-A (434 aa).

Residues Pro66–Pro94 form a disordered region. Polar residues predominate over residues Gln84–Pro94. Residues Phe101–Phe358 form the Protein kinase domain. ATP is bound by residues Ile107–Val115 and Lys130. The active-site Proton acceptor is the Asp225. The 76-residue stretch at Ser359–Leu434 folds into the AGC-kinase C-terminal domain.

Belongs to the protein kinase superfamily. AGC Ser/Thr protein kinase family.

It localises to the cytoplasm. Its subcellular location is the nucleus. The protein localises to the endoplasmic reticulum. The enzyme catalyses L-seryl-[protein] + ATP = O-phospho-L-seryl-[protein] + ADP + H(+). It catalyses the reaction L-threonyl-[protein] + ATP = O-phospho-L-threonyl-[protein] + ADP + H(+). Its function is as follows. Protein kinase that may play an important role in cellular stress response. Plays an important role in activating certain potassium, sodium, and chloride channels, suggesting an involvement in the regulation of processes such as cell survival, neuronal excitability, and renal sodium excretion. This chain is Serine/threonine-protein kinase Sgk1-A (sgk1-a), found in Xenopus laevis (African clawed frog).